Here is a 245-residue protein sequence, read N- to C-terminus: Probable phosphatase YcdX (245 aa).

9 residues coordinate Zn(2+): histidine 7, histidine 9, histidine 15, histidine 40, glutamate 73, histidine 101, histidine 131, aspartate 192, and histidine 194.

Belongs to the PHP family. Homotrimer. Zn(2+) serves as cofactor.

The sequence is that of Probable phosphatase YcdX from Shigella flexneri serotype 5b (strain 8401).